Consider the following 88-residue polypeptide: ATP synthase subunit 9, mitochondrial (88 aa).

Transmembrane regions (helical) follow at residues 30-50 (IGLTGAGAGVGIVFAAFILAV) and 66-86 (LGFALSEAVGLLALMMSFLIL).

The protein belongs to the ATPase C chain family. In terms of assembly, F-type ATPases have 2 components, CF(1) - the catalytic core - and CF(0) - the membrane proton channel. CF(1) has five subunits: alpha(3), beta(3), gamma(1), delta(1), epsilon(1). CF(0) has three main subunits: a, b and c.

The protein resides in the mitochondrion membrane. Functionally, mitochondrial membrane ATP synthase (F(1)F(0) ATP synthase or Complex V) produces ATP from ADP in the presence of a proton gradient across the membrane which is generated by electron transport complexes of the respiratory chain. F-type ATPases consist of two structural domains, F(1) - containing the extramembraneous catalytic core and F(0) - containing the membrane proton channel, linked together by a central stalk and a peripheral stalk. During catalysis, ATP synthesis in the catalytic domain of F(1) is coupled via a rotary mechanism of the central stalk subunits to proton translocation. Part of the complex F(0) domain. A homomeric c-ring of probably 10 subunits is part of the complex rotary element. This chain is ATP synthase subunit 9, mitochondrial (atp9), found in Dictyostelium citrinum (Slime mold).